The sequence spans 110 residues: Histone H2A.1 (110 aa).

It belongs to the histone H2A family. In terms of assembly, the nucleosome is a histone octamer containing two molecules each of H2A, H2B, H3 and H4 assembled in one H3-H4 heterotetramer and two H2A-H2B heterodimers. The octamer wraps approximately 147 bp of DNA. As to expression, expressed in the generative cell within the bicellular pollen. Not detected in other reproductive or vegetative tissues.

It localises to the nucleus. It is found in the chromosome. Functionally, core component of nucleosome. Nucleosomes wrap and compact DNA into chromatin, limiting DNA accessibility to the cellular machineries which require DNA as a template. Histones thereby play a central role in transcription regulation, DNA repair, DNA replication and chromosomal stability. DNA accessibility is regulated via a complex set of post-translational modifications of histones, also called histone code, and nucleosome remodeling. This Lilium longiflorum (Trumpet lily) protein is Histone H2A.1 (gcH2A).